We begin with the raw amino-acid sequence, 255 residues long: uncharacterized protein (255 aa).

Residues 1–10 show a composition bias toward basic residues; that stretch reads MSDSIHRRKV. A disordered region spans residues 1–78; sequence MSDSIHRRKV…SPMRGLPMEE (78 aa). The span at 44-61 shows a compositional bias: basic and acidic residues; it reads VFERSFSEPSLNRHRDGQ.

This is an uncharacterized protein from Arabidopsis thaliana (Mouse-ear cress).